A 231-amino-acid polypeptide reads, in one-letter code: Putative Nudix hydrolase FPV054 (231 aa).

The Nudix hydrolase domain occupies 74–217 (SKRRSFSEIL…SNEKYEYLHF (144 aa)). The Nudix box signature appears at 125-146 (GRVKNKESIYQCLSRELSEESD). Position 131 (Glu-131) interacts with Mg(2+). The active-site Nucleophile is Glu-140. 2 residues coordinate Mg(2+): Glu-144 and Asp-165.

It belongs to the Nudix hydrolase family. Requires Mg(2+) as cofactor. Mn(2+) serves as cofactor.

Decapping enzyme required for the removal of the 5'-end m7GpppN cap tethered to viral and host mRNAs to allow their decay in cells. May therefore accelerate viral and cellular mRNA turnover to eliminate competing host mRNAs and allow stage-specific synthesis of viral proteins. Acceleration of the turnover of cellular transcripts may even promote the shutoff of host protein synthesis. Does not cleave unmethylated RNAs or RNAs shorter than 24 nucleotides. This Vertebrata (FPV) protein is Putative Nudix hydrolase FPV054.